The chain runs to 160 residues: Surface-adhesin protein E (160 aa).

The first 15 residues, 1–15, serve as a signal peptide directing secretion; the sequence is MKKIILTLSLGLLTA. Residue Cys-16 is the site of N-palmitoyl cysteine attachment. The S-diacylglycerol cysteine moiety is linked to residue Cys-16. The tract at residues 41–68 is interaction with laminin and plasminogen; it reads IRLVKNVNYYIDSESIWVDNQEPQIVHF. Residues 84-108 are interaction with vitronectin and epithelial cells; it reads PKRYARSVRQYKILNCANYHLTQVR.

As to quaternary structure, homodimer. Interacts with host vitronectin, laminin and plasminogen. Can interact with both immobilized and soluble vitronectin.

Its subcellular location is the cell outer membrane. It is found in the cell surface. In terms of biological role, acts as a multifunctional adhesin involved in direct interactions with host epithelial cells and host proteins, including vitronectin, laminin and plasminogen. In addition, interaction with serum vitronectin plays an important role in bacterial serum resistance, and conversion of plasminogen to plasmin at the cell surface aids in immune evasion and contributes to bacterial virulence. Induces a pro-inflammatory epithelial cell response, leading to interleukin-8 (IL-8) secretion and up-regulation of ICAM1. The polypeptide is Surface-adhesin protein E (pe) (Haemophilus influenzae (strain NTHi 3655)).